The chain runs to 314 residues: Protoheme IX farnesyltransferase 2 (314 aa).

Helical transmembrane passes span 32 to 49, 54 to 76, 98 to 118, 120 to 140, 153 to 173, 180 to 200, 226 to 246, 249 to 269, and 285 to 305; these read VMSL…AAPV, LLAV…LNMW, IQPH…VMTL, VLVN…YAVV, IVIG…AVTG, IVLF…LALF, IFAY…LGYT, FYGV…WKVL, and FAYS…DSVV.

Belongs to the UbiA prenyltransferase family. Protoheme IX farnesyltransferase subfamily.

The protein localises to the cell inner membrane. The catalysed reaction is heme b + (2E,6E)-farnesyl diphosphate + H2O = Fe(II)-heme o + diphosphate. The protein operates within porphyrin-containing compound metabolism; heme O biosynthesis; heme O from protoheme: step 1/1. Converts heme B (protoheme IX) to heme O by substitution of the vinyl group on carbon 2 of heme B porphyrin ring with a hydroxyethyl farnesyl side group. The protein is Protoheme IX farnesyltransferase 2 of Mesorhizobium japonicum (strain LMG 29417 / CECT 9101 / MAFF 303099) (Mesorhizobium loti (strain MAFF 303099)).